We begin with the raw amino-acid sequence, 190 residues long: MKEVNKEQIEQAVRQILEAIGEDPNREGLLDTPKRVAKMYAEVFSGLNEDPKEHFQTIFGENHEELVLVKDIAFHSMCEHHLVPFYGKAHVAYIPRGGKVTGLSKLARAVEAVAKRPQLQERITSTIAESIVETLDPHGVMVVVEAEHMCMTMRGVRKPGAKTVTSAVRGVFKDDAAARAEVLEHIKRQD.

3 residues coordinate Zn(2+): C78, H81, and C150.

Belongs to the GTP cyclohydrolase I family. Toroid-shaped homodecamer, composed of two pentamers of five dimers.

It catalyses the reaction GTP + H2O = 7,8-dihydroneopterin 3'-triphosphate + formate + H(+). Its pathway is cofactor biosynthesis; 7,8-dihydroneopterin triphosphate biosynthesis; 7,8-dihydroneopterin triphosphate from GTP: step 1/1. With respect to regulation, k(+) ions moderately increases the Vmax, whereas UTP and Ca(2+) and Mg(2+) ions drastically increase the Km for GTP. The sequence is that of GTP cyclohydrolase 1 (folE) from Bacillus subtilis (strain 168).